The chain runs to 688 residues: Zinc finger CCCH domain-containing protein 22 (688 aa).

A disordered region spans residues 62–123 (ALLPPPPPPS…QPFSRSNGSV (62 aa)). The span at 101–117 (PLSASSPSSWAQAQPFS) shows a compositional bias: low complexity. The C3H1-type zinc finger occupies 233-260 (GFGWKPCLYYARGFCKNGSSCRFVHGDD). The region spanning 366 to 442 (RQIYLTFPAD…RVLVKPYKEK (77 aa)) is the RRM domain. Positions 487-522 (TNEMMLRRKLEEQQQAAELQQAIELHSRRLMDLQLL) form a coiled coil. Positions 552 to 624 (LATTMVESPP…PTKSSVSAHQ (73 aa)) are disordered. A compositionally biased stretch (basic and acidic residues) spans 574–589 (TEERKMVNGGGDKEES). Residues 613-624 (ASPTKSSVSAHQ) are compositionally biased toward polar residues.

In Oryza sativa subsp. japonica (Rice), this protein is Zinc finger CCCH domain-containing protein 22.